The following is a 238-amino-acid chain: Pyridoxine 5'-phosphate synthase (238 aa).

3-amino-2-oxopropyl phosphate-binding residues include asparagine 7 and arginine 18. Histidine 43 (proton acceptor) is an active-site residue. 1-deoxy-D-xylulose 5-phosphate-binding residues include arginine 45 and histidine 50. Residue glutamate 70 is the Proton acceptor of the active site. Position 100 (threonine 100) interacts with 1-deoxy-D-xylulose 5-phosphate. Residue histidine 190 is the Proton donor of the active site. 3-amino-2-oxopropyl phosphate is bound by residues aspartate 191 and 213–214 (GH).

This sequence belongs to the PNP synthase family. Homooctamer; tetramer of dimers.

The protein resides in the cytoplasm. It catalyses the reaction 3-amino-2-oxopropyl phosphate + 1-deoxy-D-xylulose 5-phosphate = pyridoxine 5'-phosphate + phosphate + 2 H2O + H(+). The protein operates within cofactor biosynthesis; pyridoxine 5'-phosphate biosynthesis; pyridoxine 5'-phosphate from D-erythrose 4-phosphate: step 5/5. In terms of biological role, catalyzes the complicated ring closure reaction between the two acyclic compounds 1-deoxy-D-xylulose-5-phosphate (DXP) and 3-amino-2-oxopropyl phosphate (1-amino-acetone-3-phosphate or AAP) to form pyridoxine 5'-phosphate (PNP) and inorganic phosphate. The chain is Pyridoxine 5'-phosphate synthase from Porphyromonas gingivalis (strain ATCC 33277 / DSM 20709 / CIP 103683 / JCM 12257 / NCTC 11834 / 2561).